The chain runs to 101 residues: uncharacterized protein (101 aa).

The chain crosses the membrane as a helical span at residues Val-70–Val-90.

The protein localises to the membrane. This is an uncharacterized protein from Saccharomyces cerevisiae (strain ATCC 204508 / S288c) (Baker's yeast).